Here is a 327-residue protein sequence, read N- to C-terminus: Ribose operon repressor (327 aa).

Residues 1 to 56 (MTTIKQVALEAGVSKSTVSRFIAQNGYVSDEAREKIERAIKKLNFRPNLSAQSLKT) form the HTH lacI-type domain. Positions 4-23 (IKQVALEAGVSKSTVSRFIA) form a DNA-binding region, H-T-H motif.

Its function is as follows. Transcriptional repressor for the ribose rbsDACBK operon. The polypeptide is Ribose operon repressor (rbsR) (Lactococcus lactis subsp. lactis (strain IL1403) (Streptococcus lactis)).